Here is a 278-residue protein sequence, read N- to C-terminus: Tryptophan synthase alpha chain (278 aa).

Residues Glu-61 and Asp-72 each act as proton acceptor in the active site.

It belongs to the TrpA family. Tetramer of two alpha and two beta chains.

It catalyses the reaction (1S,2R)-1-C-(indol-3-yl)glycerol 3-phosphate + L-serine = D-glyceraldehyde 3-phosphate + L-tryptophan + H2O. Its pathway is amino-acid biosynthesis; L-tryptophan biosynthesis; L-tryptophan from chorismate: step 5/5. In terms of biological role, the alpha subunit is responsible for the aldol cleavage of indoleglycerol phosphate to indole and glyceraldehyde 3-phosphate. The chain is Tryptophan synthase alpha chain from Shewanella oneidensis (strain ATCC 700550 / JCM 31522 / CIP 106686 / LMG 19005 / NCIMB 14063 / MR-1).